A 237-amino-acid chain; its full sequence is Probable F-box protein At1g53815 (237 aa).

An F-box domain is found at 41–72 (ISNILSRLPLKSKAKCRCVSKLWSSIIRRPNY).

This is Probable F-box protein At1g53815 from Arabidopsis thaliana (Mouse-ear cress).